The primary structure comprises 445 residues: Tubulin beta-4 chain (445 aa).

Residues Gln-11, Glu-69, Ser-138, Gly-142, Thr-143, Gly-144, Asn-204, and Asn-226 each contribute to the GTP site. Glu-69 lines the Mg(2+) pocket. The segment at 421–445 (EYQQYQDATADEEYDEEEEEERDAE) is disordered. The segment covering 429–445 (TADEEYDEEEEEERDAE) has biased composition (acidic residues).

The protein belongs to the tubulin family. In terms of assembly, dimer of alpha and beta chains. A typical microtubule is a hollow water-filled tube with an outer diameter of 25 nm and an inner diameter of 15 nM. Alpha-beta heterodimers associate head-to-tail to form protofilaments running lengthwise along the microtubule wall with the beta-tubulin subunit facing the microtubule plus end conferring a structural polarity. Microtubules usually have 13 protofilaments but different protofilament numbers can be found in some organisms and specialized cells. Mg(2+) is required as a cofactor.

The protein localises to the cytoplasm. Its subcellular location is the cytoskeleton. Functionally, tubulin is the major constituent of microtubules, a cylinder consisting of laterally associated linear protofilaments composed of alpha- and beta-tubulin heterodimers. Microtubules grow by the addition of GTP-tubulin dimers to the microtubule end, where a stabilizing cap forms. Below the cap, tubulin dimers are in GDP-bound state, owing to GTPase activity of alpha-tubulin. The chain is Tubulin beta-4 chain (TUBB4) from Triticum aestivum (Wheat).